The chain runs to 340 residues: S-adenosylmethionine:tRNA ribosyltransferase-isomerase (340 aa).

This sequence belongs to the QueA family. As to quaternary structure, monomer.

It localises to the cytoplasm. It carries out the reaction 7-aminomethyl-7-carbaguanosine(34) in tRNA + S-adenosyl-L-methionine = epoxyqueuosine(34) in tRNA + adenine + L-methionine + 2 H(+). It functions in the pathway tRNA modification; tRNA-queuosine biosynthesis. In terms of biological role, transfers and isomerizes the ribose moiety from AdoMet to the 7-aminomethyl group of 7-deazaguanine (preQ1-tRNA) to give epoxyqueuosine (oQ-tRNA). This Chromobacterium violaceum (strain ATCC 12472 / DSM 30191 / JCM 1249 / CCUG 213 / NBRC 12614 / NCIMB 9131 / NCTC 9757 / MK) protein is S-adenosylmethionine:tRNA ribosyltransferase-isomerase.